Reading from the N-terminus, the 596-residue chain is Probable ATP-dependent RNA helicase DDX52 (596 aa).

The residue at position 15 (lysine 15) is an N6-acetyllysine. Serine 39 carries the phosphoserine modification. A disordered region spans residues leucine 68 to glutamate 94. The Q motif signature appears at glutamine 163–methionine 191. Residues isoleucine 194–valine 372 form the Helicase ATP-binding domain. Alanine 207–threonine 214 is a binding site for ATP. The DEAD box signature appears at aspartate 316–aspartate 319. Residues threonine 383–glutamine 544 form the Helicase C-terminal domain. The interval alanine 575–serine 596 is disordered. Residues aspartate 577 to lysine 589 show a composition bias toward basic residues.

This sequence belongs to the DEAD box helicase family. DDX52/ROK1 subfamily.

The protein resides in the nucleus. Its subcellular location is the nucleolus. The enzyme catalyses ATP + H2O = ADP + phosphate + H(+). This Bos taurus (Bovine) protein is Probable ATP-dependent RNA helicase DDX52 (DDX52).